A 213-amino-acid polypeptide reads, in one-letter code: Glycerol-3-phosphate acyltransferase (213 aa).

Transmembrane regions (helical) follow at residues 4-24 (IILL…LWIG), 48-68 (ILGV…GTLA), 71-91 (LPLF…LAVI), 113-133 (VILG…IIVL), 144-164 (VIGA…GFIL), and 165-185 (TSYD…IILR).

Belongs to the PlsY family. As to quaternary structure, probably interacts with PlsX.

It localises to the cell membrane. The catalysed reaction is an acyl phosphate + sn-glycerol 3-phosphate = a 1-acyl-sn-glycero-3-phosphate + phosphate. It participates in lipid metabolism; phospholipid metabolism. Its function is as follows. Catalyzes the transfer of an acyl group from acyl-phosphate (acyl-PO(4)) to glycerol-3-phosphate (G3P) to form lysophosphatidic acid (LPA). This enzyme utilizes acyl-phosphate as fatty acyl donor, but not acyl-CoA or acyl-ACP. In Lactococcus lactis subsp. lactis (strain IL1403) (Streptococcus lactis), this protein is Glycerol-3-phosphate acyltransferase.